The primary structure comprises 353 residues: MEEQTTNVIQIYVNGTEQFNASFDFNITDVKESTDTYEFYIIGLFLSCLYTIFLFPIGFIGNILILVVNLNHRERMTIPDLYFVNLAVADLILVADSLIEVFNLNEKYYDYAVLCTFMSLFLQVNMYSSIFFLTWMSFDRYVALTSSMSSSPLRTMQHAKLSCSLIWMASILATLLPFTIVQTQHTGEVHFCFANVFEIQWLEVTIGFLIPFSIIGLCYSLIVRTLMRAQKHKGLWPRRQKALRMIVVVVLVFFICWLPENVFISIQLLQGTADPSKRTDTTLWHDYPLTGHIVNLAAFSNSCLNPIIYSFLGETFRDKLRLFIKRKASWSVVYRFCNHTLDLQIPVRSESEV.

Over 1 to 40 (MEEQTTNVIQIYVNGTEQFNASFDFNITDVKESTDTYEFY) the chain is Extracellular. Residues 41–61 (IIGLFLSCLYTIFLFPIGFIG) traverse the membrane as a helical segment. At 62–81 (NILILVVNLNHRERMTIPDL) the chain is on the cytoplasmic side. The helical transmembrane segment at 82-102 (YFVNLAVADLILVADSLIEVF) threads the bilayer. Topologically, residues 103–112 (NLNEKYYDYA) are extracellular. A helical transmembrane segment spans residues 113–133 (VLCTFMSLFLQVNMYSSIFFL). A disulfide bridge links Cys-115 with Cys-192. The Cytoplasmic segment spans residues 134-160 (TWMSFDRYVALTSSMSSSPLRTMQHAK). The helical transmembrane segment at 161-181 (LSCSLIWMASILATLLPFTIV) threads the bilayer. Over 182–202 (QTQHTGEVHFCFANVFEIQWL) the chain is Extracellular. A helical membrane pass occupies residues 203–223 (EVTIGFLIPFSIIGLCYSLIV). Residues 224 to 245 (RTLMRAQKHKGLWPRRQKALRM) are Cytoplasmic-facing. The helical transmembrane segment at 246–266 (IVVVVLVFFICWLPENVFISI) threads the bilayer. The Extracellular portion of the chain corresponds to 267-292 (QLLQGTADPSKRTDTTLWHDYPLTGH). The helical transmembrane segment at 293–313 (IVNLAAFSNSCLNPIIYSFLG) threads the bilayer. Residues 314–353 (ETFRDKLRLFIKRKASWSVVYRFCNHTLDLQIPVRSESEV) are Cytoplasmic-facing.

The protein belongs to the G-protein coupled receptor 1 family. As to quaternary structure, homodimer. Heterodimer. As to expression, expressed in brain regions that are known to control reproduction and sex behavior. Expressed in ovary, muscle and intestine. Expressed in early germ cells of the testis, including the spermatogonia, spermatocytes, and somatic cells such as Sertoli cells.

The protein localises to the nucleus. It is found in the cytoplasm. Its subcellular location is the perinuclear region. It localises to the cytoskeleton. The protein resides in the cytoplasmic vesicle membrane. The protein localises to the cell membrane. It is found in the basolateral cell membrane. Its subcellular location is the endoplasmic reticulum membrane. It localises to the early endosome. The protein resides in the recycling endosome. The protein localises to the golgi apparatus. It is found in the trans-Golgi network. Its subcellular location is the golgi apparatus membrane. It localises to the cell projection. The protein resides in the dendrite. The protein localises to the dendritic spine membrane. It is found in the axon. Its subcellular location is the postsynaptic density. It localises to the mitochondrion membrane. Its function is as follows. Membrane G-protein coupled estrogen receptor that binds to 17-beta-estradiol (E2) with high affinity, leading to rapid and transient activation of numerous intracellular signaling pathways. Plays a role in the embryonic development of sensory and motor neurons. Specifically induces apoptosis and reduces proliferation of brain cells. Involved in maintenance of meiotic arrest in oocytes. The chain is G-protein coupled estrogen receptor 1 (gper1) from Danio rerio (Zebrafish).